Here is a 373-residue protein sequence, read N- to C-terminus: Lipoyl synthase, mitochondrial (373 aa).

The N-terminal 26 residues, 1–26, are a transit peptide targeting the mitochondrion; the sequence is MALRCWDAARSLGSRIFGRYACSVRA. [4Fe-4S] cluster-binding residues include cysteine 105, cysteine 110, cysteine 116, cysteine 136, cysteine 140, cysteine 143, and serine 351. Residues 121-340 form the Radical SAM core domain; sequence EYATATATIM…EEVGNELGFH (220 aa).

Belongs to the radical SAM superfamily. Lipoyl synthase family. [4Fe-4S] cluster serves as cofactor.

Its subcellular location is the mitochondrion. It catalyses the reaction [[Fe-S] cluster scaffold protein carrying a second [4Fe-4S](2+) cluster] + N(6)-octanoyl-L-lysyl-[protein] + 2 oxidized [2Fe-2S]-[ferredoxin] + 2 S-adenosyl-L-methionine + 4 H(+) = [[Fe-S] cluster scaffold protein] + N(6)-[(R)-dihydrolipoyl]-L-lysyl-[protein] + 4 Fe(3+) + 2 hydrogen sulfide + 2 5'-deoxyadenosine + 2 L-methionine + 2 reduced [2Fe-2S]-[ferredoxin]. It functions in the pathway protein modification; protein lipoylation via endogenous pathway; protein N(6)-(lipoyl)lysine from octanoyl-[acyl-carrier-protein]: step 2/2. Catalyzes the radical-mediated insertion of two sulfur atoms into the C-6 and C-8 positions of the octanoyl moiety bound to the lipoyl domains of lipoate-dependent enzymes, thereby converting the octanoylated domains into lipoylated derivatives. The polypeptide is Lipoyl synthase, mitochondrial (Lias) (Rattus norvegicus (Rat)).